Here is a 544-residue protein sequence, read N- to C-terminus: Serine/threonine-protein kinase PAK 3 (544 aa).

The interval 1–73 (MSDSLDNEEK…EKERPEISLP (73 aa)) is disordered. Phosphoserine occurs at positions 2 and 4. Residues 18-32 (MNSNNRDSSALNHSS) are compositionally biased toward polar residues. The residue at position 50 (Ser50) is a Phosphoserine; by autocatalysis. Over residues 63–73 (KEKERPEISLP) the composition is skewed to basic and acidic residues. The segment at 65 to 108 (KERPEISLPSDFEHTIHVGFDAVTGEFTGIPEQWARLLQTSNIT) is GTPase-binding. Positions 65–135 (KERPEISLPS…YDSKETVNNQ (71 aa)) are autoregulatory region. Positions 70 to 83 (ISLPSDFEHTIHVG) constitute a CRIB domain. Residues 84–267 (FDAVTGEFTG…IVSVGDPKKK (184 aa)) are linker. A Phosphoserine; by autocatalysis modification is found at Ser139. Disordered regions lie at residues 156–197 (SNTK…RPEH) and 213–248 (PAAPNKEATPPSAENANSSTLYRNTDRQRKKSKMTD). Ser171 is modified (phosphoserine). A compositionally biased stretch (acidic residues) spans 171 to 186 (SEEEDEEEEEEEDDNE). Polar residues predominate over residues 224–235 (SAENANSSTLYR). The Protein kinase domain maps to 268–519 (YTRFEKIGQG…AKELLQHPFL (252 aa)). ATP contacts are provided by residues 274–282 (IGQGASGTV) and Lys297. Asp387 acts as the Proton acceptor in catalysis. At Thr421 the chain carries Phosphothreonine; by autocatalysis.

The protein belongs to the protein kinase superfamily. STE Ser/Thr protein kinase family. STE20 subfamily. Interacts tightly with GTP-bound but not GDP-bound CDC42/p21 and RAC1. Shows highly specific binding to the SH3 domains of phospholipase C-gamma and of adapter protein NCK. Interacts with the C-terminal of APP. Interacts with ARHGEF6 and ARHGEF7. Interacts with GIT1 and GIT2. Requires Mg(2+) as cofactor. In terms of processing, autophosphorylated when activated by CDC42/p21. Post-translationally, neddylated. In terms of tissue distribution, detected at high levels in the brain and at low levels in the testis.

Its subcellular location is the cytoplasm. The enzyme catalyses L-seryl-[protein] + ATP = O-phospho-L-seryl-[protein] + ADP + H(+). It carries out the reaction L-threonyl-[protein] + ATP = O-phospho-L-threonyl-[protein] + ADP + H(+). Activated by binding small G proteins. Binding of GTP-bound CDC42 or RAC1 to the autoregulatory region releases monomers from the autoinhibited dimer, enables phosphorylation of Thr-421 and allows the kinase domain to adopt an active structure. In terms of biological role, serine/threonine protein kinase that plays a role in a variety of different signaling pathways including cytoskeleton regulation, cell migration, or cell cycle regulation. Plays a role in dendrite spine morphogenesis as well as synapse formation and plasticity. Acts as a downstream effector of the small GTPases CDC42 and RAC1. Activation by the binding of active CDC42 and RAC1 results in a conformational change and a subsequent autophosphorylation on several serine and/or threonine residues. Phosphorylates MAPK4 and MAPK6 and activates the downstream target MAPKAPK5, a regulator of F-actin polymerization and cell migration. Additionally, phosphorylates TNNI3/troponin I to modulate calcium sensitivity and relaxation kinetics of thin myofilaments. May also be involved in early neuronal development. In hippocampal neurons, necessary for the formation of dendritic spines and excitatory synapses; this function is dependent on kinase activity and may be exerted by the regulation of actomyosin contractility through the phosphorylation of myosin II regulatory light chain (MLC). The protein is Serine/threonine-protein kinase PAK 3 (Pak3) of Rattus norvegicus (Rat).